Here is a 718-residue protein sequence, read N- to C-terminus: Serine/threonine-protein kinase tousled-like 2 (718 aa).

A disordered region spans residues 24–85 (GVSKGPLNSE…KGTPRGHKIS (62 aa)). Over residues 29-44 (PLNSESSNQSLCSVGS) the composition is skewed to polar residues. Positions 46–61 (SDKEVETPEKKQNDQR) are enriched in basic and acidic residues. S73, Q94, L99, and S102 each carry phosphoserine. Positions 147 to 176 (QQNSPSSTGSGNTEHSCSSQKQISIQHRQT) are disordered. The segment at 193–244 (NSDLEKKEGRIDDLLRANCDLRRQIDEQQKMLEKYKERLNRCVTMSKKLLIE) is required for interaction with TLK1 and DYNLL1/LC8. Coiled coils occupy residues 193-244 (NSDL…LLIE), 285-315 (AFQN…KRKP), and 349-397 (HEQE…DNSQ). The disordered stretch occupies residues 310–337 (LAKRKPPAMGQAPPATNEQKQRKSKTNG). In terms of domain architecture, Protein kinase spans 408–687 (YLLLHLLGRG…VQQLACDPYL (280 aa)). ATP contacts are provided by residues 414-422 (LGRGGFSEV) and K437. The active-site Proton acceptor is D538. At S696 the chain carries Phosphoserine; by CHEK1.

Belongs to the protein kinase superfamily. Ser/Thr protein kinase family. In terms of assembly, monomer. May form homodimers; homodimerization may enhance autophosphoylation and enzymatic activity. Heterodimer with TLK1. Interacts with YWHAZ; association with 14-3-3 proteins such as YWHAZ regulates subcellular location. May also interact with FEZ1/LZTS1 and FEZ2. Interacts with CHD7 and CHD8. Interacts with DYNLL1/LC8. Mg(2+) serves as cofactor. In terms of processing, phosphorylated at Ser-696, probably by CHEK1. Post-translationally, autophosphorylated; phosphorylation promotes the assembly of higher order oligomers and enzymatic activity. Ubiquitously expressed in all tissues examined, with high levels in heart and testis, in particular the pachytene spermatocytes and in round spermatids. Some evidence for the existence of a testis-specific isoform suggesting a role in spermatogenesis.

It localises to the nucleus. It is found in the nucleoplasm. The protein localises to the cytoplasm. The protein resides in the perinuclear region. Its subcellular location is the cytoskeleton. The enzyme catalyses L-seryl-[protein] + ATP = O-phospho-L-seryl-[protein] + ADP + H(+). It carries out the reaction L-threonyl-[protein] + ATP = O-phospho-L-threonyl-[protein] + ADP + H(+). Cell cycle-regulated, with maximal activity in the S-phase. Rapidly and transiently inhibited by phosphorylation following the generation of DNA double-stranded breaks during S-phase, probably by CHEK1, possibly at Ser-696. This inhibition is cell cycle checkpoint- and ATM-dependent. Its function is as follows. Serine/threonine-protein kinase involved in the process of chromatin assembly and probably also DNA replication, transcription, repair, and chromosome segregation. Phosphorylates the chromatin assembly factors ASF1A and ASF1B. Phosphorylation of ASF1A prevents its proteasome-mediated degradation, thereby enhancing chromatin assembly. Negative regulator of amino acid starvation-induced autophagy. Functionally, testis-specific isoforms may play a role in spermatogenesis. Highly expressed in embryos throughout development. The sequence is that of Serine/threonine-protein kinase tousled-like 2 (Tlk2) from Mus musculus (Mouse).